The chain runs to 639 residues: Sec1 family domain-containing protein 1 (639 aa).

Phosphoserine occurs at positions 34, 300, and 525.

Belongs to the STXBP/unc-18/SEC1 family. As to quaternary structure, interacts with STX17. Interacts with STX5A. Interacts with the COG complex via COG4.

The protein localises to the cytoplasm. It is found in the endoplasmic reticulum membrane. The protein resides in the golgi apparatus. Its subcellular location is the golgi stack membrane. Plays a role in SNARE-pin assembly and Golgi-to-ER retrograde transport via its interaction with COG4. Involved in vesicular transport between the endoplasmic reticulum and the Golgi. This is Sec1 family domain-containing protein 1 (Scfd1) from Mus musculus (Mouse).